The chain runs to 325 residues: DNA-directed RNA polymerase subunit alpha (325 aa).

The alpha N-terminal domain (alpha-NTD) stretch occupies residues 1-231 (MQTSLLKPKI…DQLSVFAALE (231 aa)). The segment at 246–325 (IDPILLRPVD…ENWPPAGLDK (80 aa)) is alpha C-terminal domain (alpha-CTD).

Belongs to the RNA polymerase alpha chain family. In terms of assembly, homodimer. The RNAP catalytic core consists of 2 alpha, 1 beta, 1 beta' and 1 omega subunit. When a sigma factor is associated with the core the holoenzyme is formed, which can initiate transcription.

It carries out the reaction RNA(n) + a ribonucleoside 5'-triphosphate = RNA(n+1) + diphosphate. Its function is as follows. DNA-dependent RNA polymerase catalyzes the transcription of DNA into RNA using the four ribonucleoside triphosphates as substrates. The sequence is that of DNA-directed RNA polymerase subunit alpha from Burkholderia orbicola (strain MC0-3).